Here is a 342-residue protein sequence, read N- to C-terminus: Transmembrane protein 268 (342 aa).

The tract at residues 1-30 is disordered; that stretch reads MACEPQVDPGATGPLPPSSPGWSALPGGSP. Helical transmembrane passes span 105-125 and 132-152; these read AFAV…SQMF and AGML…VLVF.

As to quaternary structure, interacts with ITGAM; this interaction inhibits ITGAM degradation via the endosome-lysosome pathway. Interacts with ITGB4; this interaction prevents ITGB4 degradation.

It localises to the cell membrane. In terms of biological role, stabilizes cell surface expression of ITGAM and participates in the adhesion and migration of phagocytes during bacterial clearance. This chain is Transmembrane protein 268, found in Homo sapiens (Human).